Consider the following 228-residue polypeptide: HTH-type transcriptional regulator ArcR (228 aa).

22–141 contributes to the a nucleoside 3',5'-cyclic phosphate binding site; the sequence is SYINIPVGVL…VKLFSLLSET (120 aa). One can recognise an HTH crp-type domain in the interval 155–228; that stretch reads KLAKERVTKI…SKNWLVSKDL (74 aa). Residues 188-207 constitute a DNA-binding region (H-T-H motif); it reads IQLLSDMAGISRETTSHIIN.

Its subcellular location is the cytoplasm. Functionally, positively regulates the expression of the arcABDCR operon under anaerobic conditions, thus playing an essential role in arginine catabolism. May also control the expression of genes encoding proteins which are involved in anaerobic metabolism. Can bind cyclic AMP. This is HTH-type transcriptional regulator ArcR (arcR) from Staphylococcus epidermidis (strain ATCC 35984 / DSM 28319 / BCRC 17069 / CCUG 31568 / BM 3577 / RP62A).